The sequence spans 432 residues: Adenylosuccinate synthetase (432 aa).

GTP is bound by residues 13-19 (GDEGKGK) and 41-43 (GHT). Residue D14 is the Proton acceptor of the active site. Mg(2+) contacts are provided by D14 and G41. IMP contacts are provided by residues 14–17 (DEGK), 39–42 (NAGH), T130, R144, Q225, T240, and R304. The Proton donor role is filled by H42. 300–306 (ATTGRRR) is a binding site for substrate. Residues R306, 332-334 (KLD), and 415-417 (STG) each bind GTP.

It belongs to the adenylosuccinate synthetase family. As to quaternary structure, homodimer. The cofactor is Mg(2+).

It is found in the cytoplasm. The enzyme catalyses IMP + L-aspartate + GTP = N(6)-(1,2-dicarboxyethyl)-AMP + GDP + phosphate + 2 H(+). It functions in the pathway purine metabolism; AMP biosynthesis via de novo pathway; AMP from IMP: step 1/2. Functionally, plays an important role in the de novo pathway of purine nucleotide biosynthesis. Catalyzes the first committed step in the biosynthesis of AMP from IMP. The sequence is that of Adenylosuccinate synthetase from Cronobacter sakazakii (strain ATCC BAA-894) (Enterobacter sakazakii).